The sequence spans 61 residues: DNA-directed RNA polymerase subunit Rpo10 (61 aa).

The Zn(2+) site is built by C6, C9, C42, and C43.

This sequence belongs to the archaeal Rpo10/eukaryotic RPB10 RNA polymerase subunit family. In terms of assembly, part of the RNA polymerase complex. Zn(2+) is required as a cofactor.

It localises to the cytoplasm. The enzyme catalyses RNA(n) + a ribonucleoside 5'-triphosphate = RNA(n+1) + diphosphate. Its function is as follows. DNA-dependent RNA polymerase (RNAP) catalyzes the transcription of DNA into RNA using the four ribonucleoside triphosphates as substrates. The protein is DNA-directed RNA polymerase subunit Rpo10 of Methanothrix thermoacetophila (strain DSM 6194 / JCM 14653 / NBRC 101360 / PT) (Methanosaeta thermophila).